Consider the following 301-residue polypeptide: Porin (301 aa).

Homotrimer.

It localises to the cell outer membrane. Forms channels that allow the passive diffusion of small hydrophilic solutes up to an exclusion limit of about 0.6 kDa. This chain is Porin, found in Rhodobacter capsulatus (Rhodopseudomonas capsulata).